The sequence spans 137 residues: Leaf-specific thionin DB4 (137 aa).

The N-terminal stretch at 1-28 (MAPSKSIKSVVICVLILGLVLEQVQVEG) is a signal peptide. Cystine bridges form between Cys31–Cys68, Cys32–Cys60, Cys40–Cys58, and Cys44–Cys54. The propeptide at 75-137 (LNLLPESGEP…DGAVIQSVEA (63 aa)) is acidic domain.

This sequence belongs to the plant thionin (TC 1.C.44) family. 4 C-C subfamily.

Its subcellular location is the secreted. In terms of biological role, thionins are small plant proteins which are toxic to animal cells. They seem to exert their toxic effect at the level of the cell membrane. Their precise function is not known. In Hordeum vulgare (Barley), this protein is Leaf-specific thionin DB4 (THI1.3).